The chain runs to 694 residues: Elongation factor G 2 (694 aa).

Residues 5-280 enclose the tr-type G domain; it reads SKYRNIGIFA…AVVDYLPSPT (276 aa). Residues 14-21, 78-82, and 132-135 each bind GTP; these read AHVDAGKT, DTPGH, and NKLD.

Belongs to the TRAFAC class translation factor GTPase superfamily. Classic translation factor GTPase family. EF-G/EF-2 subfamily.

It localises to the cytoplasm. In terms of biological role, catalyzes the GTP-dependent ribosomal translocation step during translation elongation. During this step, the ribosome changes from the pre-translocational (PRE) to the post-translocational (POST) state as the newly formed A-site-bound peptidyl-tRNA and P-site-bound deacylated tRNA move to the P and E sites, respectively. Catalyzes the coordinated movement of the two tRNA molecules, the mRNA and conformational changes in the ribosome. The chain is Elongation factor G 2 from Pseudoalteromonas translucida (strain TAC 125).